The primary structure comprises 310 residues: Probable GTP 3',8-cyclase (310 aa).

In terms of domain architecture, Radical SAM core spans 5–218; it reads KYGRSLQKLR…VNIIFELGGR (214 aa). A GTP-binding site is contributed by arginine 14. [4Fe-4S] cluster-binding residues include cysteine 21, cysteine 25, and cysteine 28. Residue lysine 62 coordinates GTP. Position 66 (glycine 66) interacts with S-adenosyl-L-methionine. Threonine 91 provides a ligand contact to GTP. Serine 115 contributes to the S-adenosyl-L-methionine binding site. Lysine 153 serves as a coordination point for GTP. Residues cysteine 251, cysteine 254, and cysteine 268 each coordinate [4Fe-4S] cluster.

It belongs to the radical SAM superfamily. MoaA family. [4Fe-4S] cluster is required as a cofactor.

The enzyme catalyses GTP + AH2 + S-adenosyl-L-methionine = (8S)-3',8-cyclo-7,8-dihydroguanosine 5'-triphosphate + 5'-deoxyadenosine + L-methionine + A + H(+). The protein operates within cofactor biosynthesis; molybdopterin biosynthesis. In terms of biological role, catalyzes the cyclization of GTP to (8S)-3',8-cyclo-7,8-dihydroguanosine 5'-triphosphate. This chain is Probable GTP 3',8-cyclase, found in Pyrobaculum aerophilum (strain ATCC 51768 / DSM 7523 / JCM 9630 / CIP 104966 / NBRC 100827 / IM2).